Here is a 426-residue protein sequence, read N- to C-terminus: MFETAIAAITAREILDSRGRPTVEAEVELECGAIGLAQVPSGASTGSFEAHELRDGDAQRYGGKGVLKAVQNIQEQIKPHLLGSDALKQELIDRKMIGLDGSANKASLGANAILAVSLATAKAGAEALGLPLYRYLGGPLANLLPVPLMNVINGGAHADNNVDFQEFMIVPHGASSFREALRWGAEVFAALSKVLHDKGLLTGVGDEGGFAPNLPSNQAALDLLMTAIAKAGFKPGEEISLALDVAASEFYQDGQYSYDGAAHSPSELIDYLATLSEQYPIVSIEDGLQEDDWQHWQQLTSKIGHRVQLVGDDLFVTNPIRLDKGIKERAGNAILIKLNQIGSLTETLQTIDLATRNRYRSIISHRSGETEDTTIADLAVATRAGQIKTGSLCRSERVAKYNRLLRIEDELGAQAIYAGTIGMGPG.

Residue Q165 participates in (2R)-2-phosphoglycerate binding. Catalysis depends on E207, which acts as the Proton donor. The Mg(2+) site is built by D244, E285, and D312. Residues K337, R366, S367, and K388 each contribute to the (2R)-2-phosphoglycerate site. The active-site Proton acceptor is the K337.

It belongs to the enolase family. Mg(2+) serves as cofactor.

It localises to the cytoplasm. It is found in the secreted. The protein resides in the cell surface. It carries out the reaction (2R)-2-phosphoglycerate = phosphoenolpyruvate + H2O. The protein operates within carbohydrate degradation; glycolysis; pyruvate from D-glyceraldehyde 3-phosphate: step 4/5. In terms of biological role, catalyzes the reversible conversion of 2-phosphoglycerate (2-PG) into phosphoenolpyruvate (PEP). It is essential for the degradation of carbohydrates via glycolysis. The chain is Enolase from Cyanothece sp. (strain PCC 7425 / ATCC 29141).